A 395-amino-acid polypeptide reads, in one-letter code: Elongation factor Tu (395 aa).

Positions 10–204 (KPHVNIGTIG…TVDEYIPTPQ (195 aa)) constitute a tr-type G domain. The G1 stretch occupies residues 19–26 (GHVDHGKT). GTP is bound at residue 19 to 26 (GHVDHGKT). Residue Thr-26 participates in Mg(2+) binding. Residues 60–64 (GITIN) are G2. The G3 stretch occupies residues 81-84 (DAPG). GTP contacts are provided by residues 81 to 85 (DAPGH) and 136 to 139 (NKCD). The tract at residues 136–139 (NKCD) is G4. The tract at residues 174-176 (SAL) is G5.

It belongs to the TRAFAC class translation factor GTPase superfamily. Classic translation factor GTPase family. EF-Tu/EF-1A subfamily. In terms of assembly, monomer.

Its subcellular location is the cytoplasm. It carries out the reaction GTP + H2O = GDP + phosphate + H(+). Its function is as follows. GTP hydrolase that promotes the GTP-dependent binding of aminoacyl-tRNA to the A-site of ribosomes during protein biosynthesis. This is Elongation factor Tu from Ligilactobacillus salivarius (strain UCC118) (Lactobacillus salivarius).